The following is an 881-amino-acid chain: Valine--tRNA ligase (881 aa).

The 'HIGH' region motif lies at 49 to 59; it reads PNVTGKLHLGH. A 'KMSKS' region motif is present at residues 526 to 530; it reads KMSKS. K529 is an ATP binding site. Residues 810 to 881 are a coiled coil; it reads LADLINLDEE…VRQRLADLEK (72 aa).

This sequence belongs to the class-I aminoacyl-tRNA synthetase family. ValS type 1 subfamily. As to quaternary structure, monomer.

The protein resides in the cytoplasm. The catalysed reaction is tRNA(Val) + L-valine + ATP = L-valyl-tRNA(Val) + AMP + diphosphate. Catalyzes the attachment of valine to tRNA(Val). As ValRS can inadvertently accommodate and process structurally similar amino acids such as threonine, to avoid such errors, it has a 'posttransfer' editing activity that hydrolyzes mischarged Thr-tRNA(Val) in a tRNA-dependent manner. This chain is Valine--tRNA ligase, found in Bacillus cereus (strain ATCC 10987 / NRS 248).